A 431-amino-acid polypeptide reads, in one-letter code: Tol-Pal system protein TolB (431 aa).

The signal sequence occupies residues 1 to 26 (MSLMTKLGFRALVASCLITAGSAANA). The segment at 406–431 (DGSAPPQILSVQGGSVREPSWGPFMQ) is disordered.

It belongs to the TolB family. As to quaternary structure, the Tol-Pal system is composed of five core proteins: the inner membrane proteins TolA, TolQ and TolR, the periplasmic protein TolB and the outer membrane protein Pal. They form a network linking the inner and outer membranes and the peptidoglycan layer.

The protein resides in the periplasm. In terms of biological role, part of the Tol-Pal system, which plays a role in outer membrane invagination during cell division and is important for maintaining outer membrane integrity. The protein is Tol-Pal system protein TolB of Burkholderia orbicola (strain MC0-3).